The following is a 393-amino-acid chain: Probable acetyl-CoA acetyltransferase (393 aa).

Cys-88 acts as the Acyl-thioester intermediate in catalysis. Residues His-348 and Cys-378 each act as proton acceptor in the active site.

This sequence belongs to the thiolase-like superfamily. Thiolase family.

It localises to the cytoplasm. The catalysed reaction is 2 acetyl-CoA = acetoacetyl-CoA + CoA. The sequence is that of Probable acetyl-CoA acetyltransferase (yqeF) from Escherichia coli (strain K12).